A 119-amino-acid chain; its full sequence is Large ribosomal subunit protein uL22 (119 aa).

It belongs to the universal ribosomal protein uL22 family. As to quaternary structure, part of the 50S ribosomal subunit.

Its function is as follows. This protein binds specifically to 23S rRNA; its binding is stimulated by other ribosomal proteins, e.g. L4, L17, and L20. It is important during the early stages of 50S assembly. It makes multiple contacts with different domains of the 23S rRNA in the assembled 50S subunit and ribosome. In terms of biological role, the globular domain of the protein is located near the polypeptide exit tunnel on the outside of the subunit, while an extended beta-hairpin is found that lines the wall of the exit tunnel in the center of the 70S ribosome. The protein is Large ribosomal subunit protein uL22 of Rickettsia canadensis (strain McKiel).